A 299-amino-acid polypeptide reads, in one-letter code: Very long chain fatty acid elongase 5 (299 aa).

Met1 bears the N-acetylmethionine mark. Helical transmembrane passes span 26–46 (WFLLDNYIPTFVCSVIYLLIV), 64–84 (ILQLYNLGLTLLSLYMFYELV), 112–132 (VLWWYYFSKLIEFMDTFFFIL), 139–158 (ITVLHVYHHATMLNIWWFVM), 168–187 (FGATLNSFIHVLMYSYYGLS), 205–225 (GQLVQFVLTIIQTTCGVFWPC), and 227–247 (FPLGWLFFQIGYMISLIALFT). Residues 274-299 (VAAVNGHTNSFPSLENSVKPRKQRKD) are disordered. Positions 279 to 289 (GHTNSFPSLEN) are enriched in polar residues.

Belongs to the ELO family. ELOVL5 subfamily. Interacts with TECR.

It localises to the endoplasmic reticulum membrane. The protein resides in the cell projection. It is found in the dendrite. The catalysed reaction is a very-long-chain acyl-CoA + malonyl-CoA + H(+) = a very-long-chain 3-oxoacyl-CoA + CO2 + CoA. It catalyses the reaction (6Z,9Z,12Z)-octadecatrienoyl-CoA + malonyl-CoA + H(+) = (8Z,11Z,14Z)-3-oxoeicosatrienoyl-CoA + CO2 + CoA. It carries out the reaction (9Z,12Z,15Z)-octadecatrienoyl-CoA + malonyl-CoA + H(+) = (11Z,14Z,17Z)-3-oxoeicosatrienoyl-CoA + CO2 + CoA. The enzyme catalyses (9Z)-hexadecenoyl-CoA + malonyl-CoA + H(+) = 3-oxo-(11Z)-octadecenoyl-CoA + CO2 + CoA. The catalysed reaction is (9Z)-octadecenoyl-CoA + malonyl-CoA + H(+) = 3-oxo-(11Z)-eicosenoyl-CoA + CO2 + CoA. It catalyses the reaction (11Z)-octadecenoyl-CoA + malonyl-CoA + H(+) = 3-oxo-(13Z)-eicosenoyl-CoA + CO2 + CoA. It carries out the reaction (9Z,12Z)-octadecadienoyl-CoA + malonyl-CoA + H(+) = (11Z,14Z)-3-oxoicosa-11,14-dienoyl-CoA + CO2 + CoA. The enzyme catalyses (6Z,9Z,12Z,15Z)-octadecatetraenoyl-CoA + malonyl-CoA + H(+) = (8Z,11Z,14Z,17Z)-3-oxoicosatetraenoyl-CoA + CO2 + CoA. The catalysed reaction is (5Z,8Z,11Z,14Z)-eicosatetraenoyl-CoA + malonyl-CoA + H(+) = (7Z,10Z,13Z,16Z)-3-oxodocosatetraenoyl-CoA + CO2 + CoA. It catalyses the reaction (5Z,8Z,11Z,14Z,17Z)-eicosapentaenoyl-CoA + malonyl-CoA + H(+) = 3-oxo-(7Z,10Z,13Z,16Z,19Z)-docosapentaenoyl-CoA + CO2 + CoA. It functions in the pathway lipid metabolism; polyunsaturated fatty acid biosynthesis. Functionally, catalyzes the first and rate-limiting reaction of the four reactions that constitute the long-chain fatty acids elongation cycle. This endoplasmic reticulum-bound enzymatic process allows the addition of 2 carbons to the chain of long- and very long-chain fatty acids (VLCFAs) per cycle. Condensing enzyme that acts specifically toward polyunsaturated acyl-CoA with the higher activity toward C18:3(n-6) acyl-CoA. May participate in the production of monounsaturated and of polyunsaturated VLCFAs of different chain lengths that are involved in multiple biological processes as precursors of membrane lipids and lipid mediators. In conditions where the essential linoleic and alpha linoleic fatty acids are lacking it is also involved in the synthesis of Mead acid from oleic acid. The chain is Very long chain fatty acid elongase 5 from Mus musculus (Mouse).